The primary structure comprises 176 residues: tRNA (cytidine(56)-2'-O)-methyltransferase (176 aa).

S-adenosyl-L-methionine contacts are provided by residues leucine 86 and glycine 111–valine 115.

The protein belongs to the aTrm56 family. Homodimer.

It is found in the cytoplasm. The enzyme catalyses cytidine(56) in tRNA + S-adenosyl-L-methionine = 2'-O-methylcytidine(56) in tRNA + S-adenosyl-L-homocysteine + H(+). Its function is as follows. Specifically catalyzes the AdoMet-dependent 2'-O-ribose methylation of cytidine at position 56 in tRNAs. This chain is tRNA (cytidine(56)-2'-O)-methyltransferase, found in Methanoregula boonei (strain DSM 21154 / JCM 14090 / 6A8).